The following is a 419-amino-acid chain: L-rhamnose isomerase (419 aa).

3 residues coordinate Mn(2+): H262, D294, and D296.

The protein belongs to the rhamnose isomerase family. Homotetramer. The cofactor is Mn(2+).

The protein resides in the cytoplasm. The catalysed reaction is L-rhamnopyranose = L-rhamnulose. Its pathway is carbohydrate degradation; L-rhamnose degradation; glycerone phosphate from L-rhamnose: step 1/3. Catalyzes the interconversion of L-rhamnose and L-rhamnulose. This Salmonella paratyphi A (strain AKU_12601) protein is L-rhamnose isomerase.